The chain runs to 238 residues: CD63 antigen (238 aa).

Residues 2-11 (AVEGGMKCVK) are Cytoplasmic-facing. A helical membrane pass occupies residues 12-32 (FLLYVLLLAFCACAVGLIAIG). Topologically, residues 33-51 (VAVQVVLKQAITHETTAGS) are extracellular. A helical membrane pass occupies residues 52–72 (LLPVVIIAVGAFLFLVAFVGC). The Cytoplasmic segment spans residues 73–81 (CGACKENYC). The chain crosses the membrane as a helical span at residues 82-102 (LMITFAIFLSLIMLVEVAVAI). The Extracellular portion of the chain corresponds to 103–203 (AGYVFRDQVK…TIAAWLRKNV (101 aa)). 3 N-linked (GlcNAc...) asparagine glycosylation sites follow: Asn-130, Asn-150, and Asn-172. A helical membrane pass occupies residues 204–224 (LLVAGAALGIAFVEVLGIIFS). At 225–238 (CCLVKSIRSGYEVM) the chain is on the cytoplasmic side. A Lysosomal targeting motif motif is present at residues 234 to 238 (GYEVM).

It belongs to the tetraspanin (TM4SF) family. As to quaternary structure, interacts with TIMP1 and ITGB1 and recruits TIMP1 to ITGB1. Interacts with CD9. Identified in a complex with CD9 and ITGB3. Interacts with PMEL. Interacts with KDR/VEGFR2; identified in a complex with ITGB1 and KDR/VEGFR2 and is required to recruit KDR to ITGB1 complexes. Interacts with SYT7. Palmitoylated at a low, basal level in unstimulated platelets. The level of palmitoylation increases when platelets are activated by thrombin (in vitro). As to expression, detected in mast cells and platelets (at protein level).

Its subcellular location is the cell membrane. It localises to the lysosome membrane. The protein resides in the late endosome membrane. The protein localises to the endosome. It is found in the multivesicular body. Its subcellular location is the melanosome. It localises to the secreted. The protein resides in the extracellular exosome. The protein localises to the cell surface. In terms of biological role, functions as a cell surface receptor for TIMP1 and plays a role in the activation of cellular signaling cascades. Plays a role in the activation of ITGB1 and integrin signaling, leading to the activation of AKT, FAK/PTK2 and MAP kinases. Promotes cell survival, reorganization of the actin cytoskeleton, cell adhesion, spreading and migration, via its role in the activation of AKT and FAK/PTK2. Plays a role in VEGFA signaling via its role in regulating the internalization of KDR/VEGFR2. Plays a role in intracellular vesicular transport processes, and is required for normal trafficking of the PMEL luminal domain that is essential for the development and maturation of melanocytes. Plays a role in the adhesion of leukocytes onto endothelial cells via its role in the regulation of SELP trafficking. May play a role in mast cell degranulation in response to Ms4a2/FceRI stimulation, but not in mast cell degranulation in response to other stimuli. The chain is CD63 antigen (Cd63) from Rattus norvegicus (Rat).